The primary structure comprises 274 residues: Glycerol uptake facilitator protein (274 aa).

A run of 2 helical transmembrane segments spans residues 3 to 23 and 38 to 58; these read AFWG…GVCA and IVVV…VGGI. An NPA 1 motif is present at residues 64–66; sequence NPA. Transmembrane regions (helical) follow at residues 82-102, 131-151, and 164-184; these read VPVY…IIYL, FANV…ILAI, and IVGF…GYAI. The NPA 2 signature appears at 185 to 187; sequence NPA. The helical transmembrane segment at 238–258 threads the bilayer; that stretch reads ITSSFWIVSVILVVVLLGLYV.

It belongs to the MIP/aquaporin (TC 1.A.8) family.

It is found in the cell membrane. The catalysed reaction is glycerol(in) = glycerol(out). In terms of biological role, mediates glycerol diffusion across the cytoplasmic membrane via a pore-type mechanism. This chain is Glycerol uptake facilitator protein (glpF), found in Bacillus subtilis (strain 168).